The primary structure comprises 676 residues: Protein kinase C delta type (676 aa).

Residues 1–106 (MAPFLRIAFN…KNNGKAEFWL (106 aa)) form the C2 domain. A phosphothreonine mark is found at T43 and T50. Residue Y64 is modified to Phosphotyrosine. The residue at position 130 (S130) is a Phosphoserine. T141 is subject to Phosphothreonine. Residue Y155 is modified to Phosphotyrosine. Residues 158–208 (NHEFIATFFGQPTFCSVCKDFVWGLNKQGYKCRQCNAAIHKKCIDKIIGRC) form a Phorbol-ester/DAG-type 1 zinc finger. T218 bears the Phosphothreonine mark. The Phorbol-ester/DAG-type 2 zinc-finger motif lies at 230 to 280 (PHRFKVHNYMSPTFCDHCGSLLWGLVKQGLKCEDCGMNVHHKCREKVANLC). Residues S299, S302, and S304 each carry the phosphoserine; by autocatalysis modification. S307 carries the post-translational modification Phosphoserine. At Y313 the chain carries Phosphotyrosine. At Y334 the chain carries Phosphotyrosine; by SRC. In terms of domain architecture, Protein kinase spans 349-603 (FIFHKVLGKG…TGNIKIHPFF (255 aa)). 355–363 (LGKGSFGKV) contributes to the ATP binding site. At Y374 the chain carries Phosphotyrosine. Residue K378 coordinates ATP. Position 451 is a phosphothreonine (T451). Residue D473 is the Proton acceptor of the active site. 2 positions are modified to phosphoserine: S503 and S506. T507 is subject to Phosphothreonine; by autocatalysis. The residue at position 567 (Y567) is a Phosphotyrosine. One can recognise an AGC-kinase C-terminal domain in the interval 604–675 (KTINWTLLEK…VNPKFEHLLE (72 aa)). Residues S645, S654, S658, and S664 each carry the phosphoserine modification.

It belongs to the protein kinase superfamily. AGC Ser/Thr protein kinase family. PKC subfamily. In terms of assembly, interacts with PDPK1 (via N-terminal region). Interacts with RAD9A. Interacts with CDCP1. Interacts with MUC1. Interacts with VASP. Interacts with CAVIN3. Interacts with PRKD2 (via N-terminus and zing-finger domain 1 and 2) in response to oxidative stress; the interaction is independent of PRKD2 tyrosine phosphorylation. Interacts with PLSC3; interaction is enhanced by UV irradiation. Interacts with PRKCH upstream open reading frame 2; the interaction leads to inhibition of kinase activity. Post-translationally, autophosphorylated and/or phosphorylated at Thr-507, within the activation loop; phosphorylation at Thr-507 is not a prerequisite for enzymatic activity. Autophosphorylated at Ser-299, Ser-302 and Ser-304. Upon TNFSF10/TRAIL treatment, phosphorylated at Tyr-155; phosphorylation is required for its translocation to the endoplasmic reticulum and cleavage by caspase-3. Phosphorylated at Tyr-313, Tyr-334 and Tyr-567; phosphorylation of Tyr-313 and Tyr-567 following thrombin or zymosan stimulation potentiates its kinase activity. Phosphorylated by protein kinase PDPK1; phosphorylation is inhibited by the apoptotic C-terminal cleavage product of PKN2. Phosphorylated at Tyr-313 through a SYK and SRC mechanism downstream of C-type lectin receptors activation, promoting its activation. In terms of processing, proteolytically cleaved into a catalytic subunit and a regulatory subunit by caspase-3 during apoptosis which results in kinase activation.

The protein resides in the cytoplasm. It localises to the perinuclear region. The protein localises to the nucleus. Its subcellular location is the cell membrane. It is found in the mitochondrion. The protein resides in the endomembrane system. It catalyses the reaction L-seryl-[protein] + ATP = O-phospho-L-seryl-[protein] + ADP + H(+). It carries out the reaction L-threonyl-[protein] + ATP = O-phospho-L-threonyl-[protein] + ADP + H(+). The catalysed reaction is L-tyrosyl-[protein] + ATP = O-phospho-L-tyrosyl-[protein] + ADP + H(+). Novel PKCs (PRKCD, PRKCE, PRKCH and PRKCQ) are calcium-insensitive, but activated by diacylglycerol (DAG) and phosphatidylserine. Three specific sites; Thr-507 (activation loop of the kinase domain), Ser-645 (turn motif) and Ser-664 (hydrophobic region), need to be phosphorylated for its full activation. Activated by caspase-3 (CASP3) cleavage during apoptosis. After cleavage, the pseudosubstrate motif in the regulatory subunit is released from the substrate recognition site of the catalytic subunit, which enables PRKCD to become constitutively activated. The catalytic subunit which displays properties of a sphingosine-dependent protein kinase is activated by D-erythro-sphingosine (Sph) or N,N-dimethyl-D-erythrosphingosine (DMS) or N,N,N-trimethyl-D-erythrosphingosine (TMS), but not by ceramide or Sph-1-P and is strongly inhibited by phosphatidylserine. Inhibited by PRKCH upstream open reading frame 2. Calcium-independent, phospholipid- and diacylglycerol (DAG)-dependent serine/threonine-protein kinase that plays contrasting roles in cell death and cell survival by functioning as a pro-apoptotic protein during DNA damage-induced apoptosis, but acting as an anti-apoptotic protein during cytokine receptor-initiated cell death, is involved in tumor suppression as well as survival of several cancers, is required for oxygen radical production by NADPH oxidase and acts as positive or negative regulator in platelet functional responses. Negatively regulates B cell proliferation and also has an important function in self-antigen induced B cell tolerance induction. Upon DNA damage, activates the promoter of the death-promoting transcription factor BCLAF1/Btf to trigger BCLAF1-mediated p53/TP53 gene transcription and apoptosis. In response to oxidative stress, interact with and activate CHUK/IKKA in the nucleus, causing the phosphorylation of p53/TP53. In the case of ER stress or DNA damage-induced apoptosis, can form a complex with the tyrosine-protein kinase ABL1 which trigger apoptosis independently of p53/TP53. In cytosol can trigger apoptosis by activating MAPK11 or MAPK14, inhibiting AKT1 and decreasing the level of X-linked inhibitor of apoptosis protein (XIAP), whereas in nucleus induces apoptosis via the activation of MAPK8 or MAPK9. Upon ionizing radiation treatment, is required for the activation of the apoptosis regulators BAX and BAK, which trigger the mitochondrial cell death pathway. Can phosphorylate MCL1 and target it for degradation which is sufficient to trigger for BAX activation and apoptosis. Is required for the control of cell cycle progression both at G1/S and G2/M phases. Mediates phorbol 12-myristate 13-acetate (PMA)-induced inhibition of cell cycle progression at G1/S phase by up-regulating the CDK inhibitor CDKN1A/p21 and inhibiting the cyclin CCNA2 promoter activity. In response to UV irradiation can phosphorylate CDK1, which is important for the G2/M DNA damage checkpoint activation. Can protect glioma cells from the apoptosis induced by TNFSF10/TRAIL, probably by inducing increased phosphorylation and subsequent activation of AKT1. Is highly expressed in a number of cancer cells and promotes cell survival and resistance against chemotherapeutic drugs by inducing cyclin D1 (CCND1) and hyperphosphorylation of RB1, and via several pro-survival pathways, including NF-kappa-B, AKT1 and MAPK1/3 (ERK1/2). Involved in antifungal immunity by mediating phosphorylation and activation of CARD9 downstream of C-type lectin receptors activation, promoting interaction between CARD9 and BCL10, followed by activation of NF-kappa-B and MAP kinase p38 pathways. Can also act as tumor suppressor upon mitogenic stimulation with PMA or TPA. In N-formyl-methionyl-leucyl-phenylalanine (fMLP)-treated cells, is required for NCF1 (p47-phox) phosphorylation and activation of NADPH oxidase activity, and regulates TNF-elicited superoxide anion production in neutrophils, by direct phosphorylation and activation of NCF1 or indirectly through MAPK1/3 (ERK1/2) signaling pathways. May also play a role in the regulation of NADPH oxidase activity in eosinophil after stimulation with IL5, leukotriene B4 or PMA. In collagen-induced platelet aggregation, acts a negative regulator of filopodia formation and actin polymerization by interacting with and negatively regulating VASP phosphorylation. Downstream of PAR1, PAR4 and CD36/GP4 receptors, regulates differentially platelet dense granule secretion; acts as a positive regulator in PAR-mediated granule secretion, whereas it negatively regulates CD36/GP4-mediated granule release. Phosphorylates MUC1 in the C-terminal and regulates the interaction between MUC1 and beta-catenin. The catalytic subunit phosphorylates 14-3-3 proteins (YWHAB, YWHAZ and YWHAH) in a sphingosine-dependent fashion. Phosphorylates ELAVL1 in response to angiotensin-2 treatment. Phosphorylates mitochondrial phospholipid scramblase 3 (PLSCR3), resulting in increased cardiolipin expression on the mitochondrial outer membrane which facilitates apoptosis. Phosphorylates SMPD1 which induces SMPD1 secretion. The protein is Protein kinase C delta type of Homo sapiens (Human).